Reading from the N-terminus, the 191-residue chain is ATP synthase subunit b 1 (191 aa).

Residues 7-25 traverse the membrane as a helical segment; sequence RMRILCLCATTLLMAGSAL.

It belongs to the ATPase B chain family. F-type ATPases have 2 components, F(1) - the catalytic core - and F(0) - the membrane proton channel. F(1) has five subunits: alpha(3), beta(3), gamma(1), delta(1), epsilon(1). F(0) has three main subunits: a(1), b(2) and c(10-14). The alpha and beta chains form an alternating ring which encloses part of the gamma chain. F(1) is attached to F(0) by a central stalk formed by the gamma and epsilon chains, while a peripheral stalk is formed by the delta and b chains.

The protein localises to the cell inner membrane. Functionally, f(1)F(0) ATP synthase produces ATP from ADP in the presence of a proton or sodium gradient. F-type ATPases consist of two structural domains, F(1) containing the extramembraneous catalytic core and F(0) containing the membrane proton channel, linked together by a central stalk and a peripheral stalk. During catalysis, ATP synthesis in the catalytic domain of F(1) is coupled via a rotary mechanism of the central stalk subunits to proton translocation. Its function is as follows. Component of the F(0) channel, it forms part of the peripheral stalk, linking F(1) to F(0). The sequence is that of ATP synthase subunit b 1 from Syntrophotalea carbinolica (strain DSM 2380 / NBRC 103641 / GraBd1) (Pelobacter carbinolicus).